Here is a 93-residue protein sequence, read N- to C-terminus: Cell division protein FtsB (93 aa).

Topologically, residues 1–3 (MRV) are cytoplasmic. The chain crosses the membrane as a helical span at residues 4-21 (TLVVLLALFLALQYRLWF). The Periplasmic portion of the chain corresponds to 22–93 (GKNSLPDYWR…FFRLVPDRNP (72 aa)). Residues 28–75 (DYWRLQQEVSNQKNTNENLERRNQLIYADIEDLREGEDALEERARNEL) are a coiled coil.

This sequence belongs to the FtsB family. In terms of assembly, part of a complex composed of FtsB, FtsL and FtsQ.

The protein resides in the cell inner membrane. In terms of biological role, essential cell division protein. May link together the upstream cell division proteins, which are predominantly cytoplasmic, with the downstream cell division proteins, which are predominantly periplasmic. The chain is Cell division protein FtsB from Idiomarina loihiensis (strain ATCC BAA-735 / DSM 15497 / L2-TR).